Consider the following 692-residue polypeptide: Elongation factor G (692 aa).

The 275-residue stretch at 8–282 (ENTRNIGIMA…AVIDYLPSPL (275 aa)) folds into the tr-type G domain. GTP contacts are provided by residues 17–24 (AHIDAGKT), 81–85 (DTPGH), and 135–138 (NKMD).

The protein belongs to the TRAFAC class translation factor GTPase superfamily. Classic translation factor GTPase family. EF-G/EF-2 subfamily.

It localises to the cytoplasm. Catalyzes the GTP-dependent ribosomal translocation step during translation elongation. During this step, the ribosome changes from the pre-translocational (PRE) to the post-translocational (POST) state as the newly formed A-site-bound peptidyl-tRNA and P-site-bound deacylated tRNA move to the P and E sites, respectively. Catalyzes the coordinated movement of the two tRNA molecules, the mRNA and conformational changes in the ribosome. This is Elongation factor G from Bacillus cytotoxicus (strain DSM 22905 / CIP 110041 / 391-98 / NVH 391-98).